Consider the following 346-residue polypeptide: D-fructose 1,6-bisphosphatase class 2/sedoheptulose 1,7-bisphosphatase (346 aa).

Residues aspartate 33, glutamate 57, aspartate 97, and glutamate 100 each coordinate Mn(2+). Substrate-binding positions include 100 to 102 (EGT), tyrosine 131, 176 to 178 (RDR), and 198 to 200 (DGD). A Mn(2+)-binding site is contributed by glutamate 225.

This sequence belongs to the FBPase class 2 family. Homotetramer. The cofactor is Mn(2+).

It catalyses the reaction beta-D-fructose 1,6-bisphosphate + H2O = beta-D-fructose 6-phosphate + phosphate. The enzyme catalyses D-sedoheptulose 1,7-bisphosphate + H2O = D-sedoheptulose 7-phosphate + phosphate. Its pathway is carbohydrate biosynthesis; Calvin cycle. Its function is as follows. Catalyzes the hydrolysis of fructose 1,6-bisphosphate (Fru 1,6-P2) and sedoheptulose 1,7-bisphosphate (Sed 1,7-P2) to fructose 6-phosphate and sedoheptulose 7-phosphate, respectively. This Gloeobacter violaceus (strain ATCC 29082 / PCC 7421) protein is D-fructose 1,6-bisphosphatase class 2/sedoheptulose 1,7-bisphosphatase.